The following is a 725-amino-acid chain: Catalase-peroxidase (725 aa).

A cross-link (tryptophyl-tyrosyl-methioninium (Trp-Tyr) (with M-253)) is located at residues 99–227; that stretch reads WHAAGTYRIA…LAAVMMGLIY (129 aa). Residue His100 is the Proton acceptor of the active site. The tryptophyl-tyrosyl-methioninium (Tyr-Met) (with W-99) cross-link spans 227–253; that stretch reads YVNPEGVDGNPDPLKTAHDIRITFSRM. His268 lines the heme b pocket.

This sequence belongs to the peroxidase family. Peroxidase/catalase subfamily. Homodimer or homotetramer. Heme b serves as cofactor. In terms of processing, formation of the three residue Trp-Tyr-Met cross-link is important for the catalase, but not the peroxidase activity of the enzyme.

The enzyme catalyses H2O2 + AH2 = A + 2 H2O. The catalysed reaction is 2 H2O2 = O2 + 2 H2O. Bifunctional enzyme with both catalase and broad-spectrum peroxidase activity. In Picosynechococcus sp. (strain ATCC 27264 / PCC 7002 / PR-6) (Agmenellum quadruplicatum), this protein is Catalase-peroxidase.